We begin with the raw amino-acid sequence, 243 residues long: Biosynthetic peptidoglycan transglycosylase (243 aa).

A helical membrane pass occupies residues 21–43; it reads LLIVSLVSALMSVLQVIVFRFVD.

Belongs to the glycosyltransferase 51 family.

Its subcellular location is the cell inner membrane. The enzyme catalyses [GlcNAc-(1-&gt;4)-Mur2Ac(oyl-L-Ala-gamma-D-Glu-L-Lys-D-Ala-D-Ala)](n)-di-trans,octa-cis-undecaprenyl diphosphate + beta-D-GlcNAc-(1-&gt;4)-Mur2Ac(oyl-L-Ala-gamma-D-Glu-L-Lys-D-Ala-D-Ala)-di-trans,octa-cis-undecaprenyl diphosphate = [GlcNAc-(1-&gt;4)-Mur2Ac(oyl-L-Ala-gamma-D-Glu-L-Lys-D-Ala-D-Ala)](n+1)-di-trans,octa-cis-undecaprenyl diphosphate + di-trans,octa-cis-undecaprenyl diphosphate + H(+). Its pathway is cell wall biogenesis; peptidoglycan biosynthesis. In terms of biological role, peptidoglycan polymerase that catalyzes glycan chain elongation from lipid-linked precursors. The sequence is that of Biosynthetic peptidoglycan transglycosylase from Xylella fastidiosa (strain Temecula1 / ATCC 700964).